Here is a 649-residue protein sequence, read N- to C-terminus: Putative calpain-like cysteine protease A (649 aa).

A propeptide spanning residues 1-3 is cleaved from the precursor; it reads MLT. Disordered stretches follow at residues 1–22 and 124–193; these read MLTT…SSPS and PLSN…SMPA. In terms of domain architecture, C2 spans 15–123; sequence TTTTSSPSSD…LHANGEAKWY (109 aa). Residues 140-149 are compositionally biased toward low complexity; sequence ITNSNNKDNN. A compositionally biased stretch (basic and acidic residues) spans 159–172; the sequence is AQEKGDEDQHHSAD. Domain III regions lie at residues 458 to 489 and 498 to 633; these read EGTY…NATF and EVEQ…ISLD.

Belongs to the peptidase C2 family. Monomer. In terms of processing, undergoes autolytic cleavage between Pro-192 and Ala-193.

It is found in the cytoplasm. Its subcellular location is the cytosol. Has a weak caseinolytic activity. The polypeptide is Putative calpain-like cysteine protease A (cplA) (Dictyostelium discoideum (Social amoeba)).